Here is a 184-residue protein sequence, read N- to C-terminus: MKNVTDSFVSLGHWPSAGSFGFNTDILATNPINLSVVLGVLIFFGKGVLSDLLDNRKQRILNTIRNSEELRGGAIEQLEKARSRLRKVESEAEQFRVNGYSEIEREKLNLINSTYKTLEQLENYKNETIQFEQQRAINQVRQRVFQQALRGALGTLNSCLNNELHLRTISANIGMLGTMKEITD.

The helical transmembrane segment at 27-49 threads the bilayer; the sequence is LATNPINLSVVLGVLIFFGKGVL.

It belongs to the ATPase B chain family. As to quaternary structure, F-type ATPases have 2 components, F(1) - the catalytic core - and F(0) - the membrane proton channel. F(1) has five subunits: alpha(3), beta(3), gamma(1), delta(1), epsilon(1). F(0) has four main subunits: a(1), b(1), b'(1) and c(10-14). The alpha and beta chains form an alternating ring which encloses part of the gamma chain. F(1) is attached to F(0) by a central stalk formed by the gamma and epsilon chains, while a peripheral stalk is formed by the delta, b and b' chains.

It is found in the plastid. The protein localises to the chloroplast thylakoid membrane. In terms of biological role, f(1)F(0) ATP synthase produces ATP from ADP in the presence of a proton or sodium gradient. F-type ATPases consist of two structural domains, F(1) containing the extramembraneous catalytic core and F(0) containing the membrane proton channel, linked together by a central stalk and a peripheral stalk. During catalysis, ATP synthesis in the catalytic domain of F(1) is coupled via a rotary mechanism of the central stalk subunits to proton translocation. Its function is as follows. Component of the F(0) channel, it forms part of the peripheral stalk, linking F(1) to F(0). This Nicotiana sylvestris (Wood tobacco) protein is ATP synthase subunit b, chloroplastic.